The chain runs to 183 residues: Ferredoxin-2, mitochondrial (183 aa).

A mitochondrion-targeting transit peptide spans 1-52 (MAASMARGGVSARVLLQAARGTWWNRPGGTSGSGEGVALGTTRKFQATGSRP). The segment at 45–65 (FQATGSRPAGEEDAGGPERPG) is disordered. The region spanning 68 to 170 (VNVVFVDRSG…GAEFTLPKIT (103 aa)) is the 2Fe-2S ferredoxin-type domain. Residues Cys-105, Cys-111, Cys-114, and Cys-151 each coordinate [2Fe-2S] cluster.

Belongs to the adrenodoxin/putidaredoxin family. Component of the mitochondrial core iron-sulfur cluster (ISC) complex composed of NFS1, LYRM4, NDUFAB1, ISCU, FXN, and FDX2; this complex is a heterohexamer containing two copies of each monomer. Form a heterodimer complex with NFS1. Interacts (in both their reduced and oxidized states) with the cysteine desulfurase complex; this interaction stimulates cysteine desulfurase activity, and serves as a reductant for Fe-S cluster assembly. The cofactor is [2Fe-2S] cluster. In terms of tissue distribution, widely expressed, with highest levels in testis, kidney and brain (at protein level). Expressed in muscle (at protein level). Expressed in fibroblasts (at protein level).

It is found in the mitochondrion. The protein resides in the mitochondrion matrix. Functionally, electron donor, of the core iron-sulfur cluster (ISC) assembly complex, that acts to reduce the persulfide into sulfide during [2Fe-2S] clusters assembly on the scaffolding protein ISCU. The core iron-sulfur cluster (ISC) assembly complex is involved in the de novo synthesis of a [2Fe-2S] cluster, the first step of the mitochondrial iron-sulfur protein biogenesis. This process is initiated by the cysteine desulfurase complex (NFS1:LYRM4:NDUFAB1) that produces persulfide which is delivered on the scaffold protein ISCU in a FXN-dependent manner. Then this complex is stabilized by FDX2 which provides reducing equivalents to accomplish the [2Fe-2S] cluster assembly. Finally, the [2Fe-2S] cluster is transferred from ISCU to chaperone proteins, including HSCB, HSPA9 and GLRX5. Essential for coenzyme Q biosynthesis: together with FDXR, transfers the electrons required for the hydroxylation reaction performed by COQ6. This chain is Ferredoxin-2, mitochondrial, found in Homo sapiens (Human).